A 414-amino-acid chain; its full sequence is E3 ubiquitin-protein ligase makorin-2 (414 aa).

2 consecutive C3H1-type zinc fingers follow at residues 2–29 (STKQ…HDLT) and 31–58 (SKPS…HIKP). Residues 57–94 (KPPGRGSGAPADHSNRSSSSAGASAPGPGPPANTSKHL) are disordered. Residues 73–82 (SSSSAGASAP) are compositionally biased toward low complexity. The C3H1-type 3 zinc-finger motif lies at 164–191 (QTSPQICPFLAAGQCQYGESCPYLHGEM). A makorin-type Cys-His region spans residues 192–221 (CEICRQHVLHPHDPEQRAAHEKKCMVAFEM). An RING-type zinc finger spans residues 237 to 291 (CKICLDVVYEKSSPSERRFGILSSCAHTYCLNCIRQWRCVEQLHNQIRKSCPECR). The C3H1-type 4 zinc finger occupies 320–349 (GVSKKACKYFDQGRGTCPFGGKCFYMHAYA).

The protein resides in the cytoplasm. It localises to the nucleus. It carries out the reaction S-ubiquitinyl-[E2 ubiquitin-conjugating enzyme]-L-cysteine + [acceptor protein]-L-lysine = [E2 ubiquitin-conjugating enzyme]-L-cysteine + N(6)-ubiquitinyl-[acceptor protein]-L-lysine.. Its pathway is protein modification; protein ubiquitination. Its function is as follows. E3 ubiquitin ligase catalyzing the covalent attachment of ubiquitin moieties onto substrate proteins. Inhibits neurogenesis and axis formation during embryonic development by modulating the phosphatidylinositol 3-kinase (PI3K) pathway. Acts downstream of PI3K and akt1 to up-regulate gsk3b mRNA expression. The polypeptide is E3 ubiquitin-protein ligase makorin-2 (mkrn2) (Danio rerio (Zebrafish)).